A 330-amino-acid polypeptide reads, in one-letter code: B-cell receptor CD22 (330 aa).

An N-terminal signal peptide occupies residues 1-17; the sequence is MHLLGPWLLLLEYLAFS. Positions 18-136 constitute an Ig-like V-type domain; sequence DSSKWAFEHP…MERIHLNVSE (119 aa). Topologically, residues 18-330 are extracellular; sequence DSSKWAFEHP…VFLQVQYAPE (313 aa). 3 disulfides stabilise this stretch: cysteine 37–cysteine 165, cysteine 42–cysteine 100, and cysteine 159–cysteine 217. N-linked (GlcNAc...) asparagine glycans are attached at residues asparagine 65, asparagine 99, and asparagine 110. An N-acetylneuraminate-binding site is contributed by arginine 118. Residues asparagine 133, asparagine 162, asparagine 187, and asparagine 229 are each glycosylated (N-linked (GlcNAc...) asparagine). Ig-like C2-type domains lie at 141 to 233 and 240 to 324; these read PHIQ…DTVQ and PKLK…VFLQ. An intrachain disulfide couples cysteine 263 to cysteine 307.

The protein belongs to the immunoglobulin superfamily. SIGLEC (sialic acid binding Ig-like lectin) family. In terms of assembly, predominantly monomer of isoform CD22-beta. Also found as heterodimer of isoform CD22-beta and a shorter isoform. Interacts with PTPN6/SHP-1, LYN, SYK, PIK3R1/PIK3R2 and PLCG1 upon phosphorylation. Interacts with GRB2, INPP5D and SHC1 upon phosphorylation. May form a complex with INPP5D/SHIP, GRB2 and SHC1.

The protein resides in the cell membrane. In terms of biological role, most highly expressed siglec (sialic acid-binding immunoglobulin-like lectin) on B-cells that plays a role in various aspects of B-cell biology including differentiation, antigen presentation, and trafficking to bone marrow. Binds to alpha 2,6-linked sialic acid residues of surface molecules such as CD22 itself, CD45 and IgM in a cis configuration. Can also bind to ligands on other cells as an adhesion molecule in a trans configuration. Acts as an inhibitory coreceptor on the surface of B-cells and inhibits B-cell receptor induced signaling, characterized by inhibition of the calcium mobilization and cellular activation. Mechanistically, the immunoreceptor tyrosine-based inhibitory motif domain is phosphorylated by the Src kinase LYN, which in turn leads to the recruitment of the protein tyrosine phosphatase 1/PTPN6, leading to the negative regulation of BCR signaling. If this negative signaling from is of sufficient strength, apoptosis of the B-cell can be induced. In Pongo pygmaeus (Bornean orangutan), this protein is B-cell receptor CD22.